We begin with the raw amino-acid sequence, 282 residues long: Bifunctional protein FolD (282 aa).

NADP(+) is bound by residues 164 to 166 (GAS), isoleucine 189, and isoleucine 230.

This sequence belongs to the tetrahydrofolate dehydrogenase/cyclohydrolase family. Homodimer.

It catalyses the reaction (6R)-5,10-methylene-5,6,7,8-tetrahydrofolate + NADP(+) = (6R)-5,10-methenyltetrahydrofolate + NADPH. The catalysed reaction is (6R)-5,10-methenyltetrahydrofolate + H2O = (6R)-10-formyltetrahydrofolate + H(+). It participates in one-carbon metabolism; tetrahydrofolate interconversion. Catalyzes the oxidation of 5,10-methylenetetrahydrofolate to 5,10-methenyltetrahydrofolate and then the hydrolysis of 5,10-methenyltetrahydrofolate to 10-formyltetrahydrofolate. The protein is Bifunctional protein FolD of Campylobacter jejuni subsp. jejuni serotype O:6 (strain 81116 / NCTC 11828).